Consider the following 106-residue polypeptide: MRLTYVLLVAVTTLLVSCDATKPSTEATAVSKRLLRFVEAADEEERRIDFSPEKLRKMLGDETYRLKKFGKWDSDGHTFDGLKHYLLLSDSSMVKLRNMYKAWLEQ.

An N-terminal signal peptide occupies residues 1-20; sequence MRLTYVLLVAVTTLLVSCDA. The RxLR-dEER signature appears at 33 to 46; it reads RLLRFVEAADEEER. The interval 50-106 is WY domain; that stretch reads FSPEKLRKMLGDETYRLKKFGKWDSDGHTFDGLKHYLLLSDSSMVKLRNMYKAWLEQ. Positions 56-69 match the Bipartite nuclear localization signal (NLS) motif; it reads RKMLGDETYRLKKF.

This sequence belongs to the RxLR effector family. In terms of assembly, interacts with host PINP1.

It localises to the secreted. The protein localises to the host nucleus. Its function is as follows. Secreted effector that possesses RNA silencing suppression activity by inhibiting the biogenesis of small RNAs in the host plant to promote enhanced susceptibility of host to the pathogen during infection. Interferes with secondary siRNA production by associating with host nuclear protein PINP1 that acts as a regulator of the accumulation of both microRNAs and endogenous small interfering RNAs. This chain is RxLR effector protein PSR1, found in Phytophthora sojae (Soybean stem and root rot agent).